A 394-amino-acid polypeptide reads, in one-letter code: Aromatic aminotransferase ISS1 (394 aa).

At Gly2 the chain carries N-acetylglycine. Gly38 is a substrate binding site. Residues Tyr64, Ala98–Asn99, Tyr123, Asn176, Tyr207, and Ser230–Ser232 each bind pyridoxal 5'-phosphate. 2 residues coordinate substrate: Tyr123 and Asn176. Residue Lys233 is modified to N6-(pyridoxal phosphate)lysine. Arg241 provides a ligand contact to pyridoxal 5'-phosphate. The substrate site is built by Arg362 and Arg374.

This sequence belongs to the class-I pyridoxal-phosphate-dependent aminotransferase family. Homodimer. Pyridoxal 5'-phosphate serves as cofactor. Expressed in roots, cotyledons and flowers.

Its subcellular location is the cytoplasm. It catalyses the reaction a 2-oxocarboxylate + L-methionine = 4-methylsulfanyl-2-oxobutanoate + an L-alpha-amino acid. It carries out the reaction L-tryptophan + 2-oxoglutarate = indole-3-pyruvate + L-glutamate. The enzyme catalyses L-tyrosine + 2-oxoglutarate = 3-(4-hydroxyphenyl)pyruvate + L-glutamate. Coordinates and prevents auxin (IAA) and ethylene biosynthesis, thus regulating auxin homeostasis in young seedlings. Shows aminotransferase activity with methionine; can use the ethylene biosynthetic intermediate L-methionine (L-Met) as an amino donor and the auxin biosynthetic intermediate, indole-3-pyruvic acid (3-IPA) as an amino acceptor to produce L-tryptophan (L-Trp) and 2-oxo-4-methylthiobutyric acid (KMBA). Can also use tryptophan (Trp), phenylalanine (Phe), and tyrosine (Tyr) as substrates. Regulates tryptophan (Trp) homeostasis and catabolism in mature plants. Also possibly involved in the metabolism of other aromatic amino acids and phenylpropanoid homeostasis. In Arabidopsis thaliana (Mouse-ear cress), this protein is Aromatic aminotransferase ISS1.